Here is a 106-residue protein sequence, read N- to C-terminus: Small ribosomal subunit protein mS33 (106 aa).

S2 carries the post-translational modification N-acetylserine. A compositionally biased stretch (basic residues) spans 85-94; sequence LKKLRGKVKP. The disordered stretch occupies residues 85-106; that stretch reads LKKLRGKVKPRKGEGKRAAKKK. Basic and acidic residues predominate over residues 95–106; sequence RKGEGKRAAKKK.

Belongs to the mitochondrion-specific ribosomal protein mS33 family. Component of the mitochondrial ribosome small subunit (28S) which comprises a 12S rRNA and about 30 distinct proteins.

It localises to the mitochondrion. The polypeptide is Small ribosomal subunit protein mS33 (Bos taurus (Bovine)).